Here is a 173-residue protein sequence, read N- to C-terminus: Alpha-crystallin A chain (173 aa).

Methionine 1 is subject to N-acetylmethionine. The interval methionine 1–glutamate 63 is required for complex formation with BFSP1 and BFSP2. Glutamine 6 bears the Deamidated glutamine; partial mark. Serine 45 is subject to Phosphoserine. A Deamidated glutamine; partial modification is found at glutamine 50. A sHSP domain is found at leucine 52–serine 162. Lysine 70 carries the post-translational modification N6-acetyllysine. Glutamine 90 carries the post-translational modification Deamidated glutamine; partial. Lysine 99 is modified (N6-acetyllysine). Residue histidine 100 participates in Zn(2+) binding. Position 101 is a deamidated asparagine; partial (asparagine 101). Glutamate 102 and histidine 107 together coordinate Zn(2+). Serine 122 bears the Phosphoserine mark. The residue at position 123 (asparagine 123) is a Deamidated asparagine; partial. The segment at proline 144–serine 173 is disordered. Residues glycine 153–proline 167 are compositionally biased toward basic and acidic residues. Histidine 154 serves as a coordination point for Zn(2+). O-linked (GlcNAc) serine glycosylation occurs at serine 162.

This sequence belongs to the small heat shock protein (HSP20) family. As to quaternary structure, heteromer composed of three CRYAA and one CRYAB subunits. Inter-subunit bridging via zinc ions enhances stability, which is crucial as there is no protein turn over in the lens. Can also form homodimers and homotetramers (dimers of dimers) which serve as the building blocks of homooligomers. Within homooligomers, the zinc-binding motif is created from residues of 3 different molecules. His-100 and Glu-102 from one molecule are ligands of the zinc ion, and His-107 and His-154 residues from additional molecules complete the site with tetrahedral coordination geometry. Part of a complex required for lens intermediate filament formation composed of BFSP1, BFSP2 and CRYAA. Post-translationally, acetylation at Lys-70 may increase chaperone activity. Undergoes age-dependent proteolytical cleavage at the C-terminus.

The protein localises to the cytoplasm. It is found in the nucleus. Functionally, contributes to the transparency and refractive index of the lens. Acts as a chaperone, preventing aggregation of various proteins under a wide range of stress conditions. Required for the correct formation of lens intermediate filaments as part of a complex composed of BFSP1, BFSP2 and CRYAA. This is Alpha-crystallin A chain (CRYAA) from Giraffa camelopardalis (Giraffe).